The chain runs to 636 residues: ABC transporter ATP-binding protein RamA (636 aa).

A run of 5 helical transmembrane segments spans residues 45–65 (VLVL…PLAL), 78–98 (AGWW…LDSA), 175–195 (LVDV…ALLL), 269–289 (GVLV…RLAA), and 297–317 (LLAV…ASLL). The ABC transmembrane type-1 domain maps to 45–322 (VLVLLCSVAA…AASLLGAIVR (278 aa)). An ABC transporter domain is found at 354–585 (LRLCGVRVLR…AGYREVFGAG (232 aa)). 386-393 (GRSGAGKS) is an ATP binding site. Positions 589-606 (GAGAGAGAGADAGAGADA) are enriched in gly residues. The disordered stretch occupies residues 589–636 (GAGAGAGAGADAGAGADAGPGPDSGAATAVGGSGPGPVRRPEPEEARP). Over residues 607 to 618 (GPGPDSGAATAV) the composition is skewed to low complexity. Over residues 627–636 (RRPEPEEARP) the composition is skewed to basic and acidic residues.

The protein belongs to the ABC transporter superfamily.

It localises to the cell membrane. Functionally, probably involved in exporting SapB from the cell. Expression of the ram locus (ramA, ramB and ramR) induces rapid aerial mycelium formation in S.lividans. The chain is ABC transporter ATP-binding protein RamA from Streptomyces coelicolor (strain ATCC BAA-471 / A3(2) / M145).